We begin with the raw amino-acid sequence, 318 residues long: Pantothenate kinase (318 aa).

Residue 96–103 (GSVAVGKS) coordinates ATP.

It belongs to the prokaryotic pantothenate kinase family.

It is found in the cytoplasm. The catalysed reaction is (R)-pantothenate + ATP = (R)-4'-phosphopantothenate + ADP + H(+). It functions in the pathway cofactor biosynthesis; coenzyme A biosynthesis; CoA from (R)-pantothenate: step 1/5. This is Pantothenate kinase from Nitrobacter hamburgensis (strain DSM 10229 / NCIMB 13809 / X14).